Consider the following 188-residue polypeptide: Peptide deformylase (188 aa).

Residues 70 to 90 are disordered; that stretch reads AEPVACDHDGHHHHHQPTKKE. Residues C113 and H155 each coordinate Fe cation. E156 is an active-site residue. Fe cation is bound at residue H159.

The protein belongs to the polypeptide deformylase family. Fe(2+) serves as cofactor.

It carries out the reaction N-terminal N-formyl-L-methionyl-[peptide] + H2O = N-terminal L-methionyl-[peptide] + formate. Its function is as follows. Removes the formyl group from the N-terminal Met of newly synthesized proteins. Requires at least a dipeptide for an efficient rate of reaction. N-terminal L-methionine is a prerequisite for activity but the enzyme has broad specificity at other positions. This Novosphingobium aromaticivorans (strain ATCC 700278 / DSM 12444 / CCUG 56034 / CIP 105152 / NBRC 16084 / F199) protein is Peptide deformylase.